The chain runs to 990 residues: Bifunctional glutamine synthetase adenylyltransferase/adenylyl-removing enzyme (990 aa).

The adenylyl removase stretch occupies residues 1-474; it reads MPTDNENSMT…HFNELVEESQ (474 aa). Residues 484 to 990 form an adenylyl transferase region; that stretch reads FIACQDAWRL…WDTLFGTCSE (507 aa).

This sequence belongs to the GlnE family. It depends on Mg(2+) as a cofactor.

The enzyme catalyses [glutamine synthetase]-O(4)-(5'-adenylyl)-L-tyrosine + phosphate = [glutamine synthetase]-L-tyrosine + ADP. It catalyses the reaction [glutamine synthetase]-L-tyrosine + ATP = [glutamine synthetase]-O(4)-(5'-adenylyl)-L-tyrosine + diphosphate. Its function is as follows. Involved in the regulation of glutamine synthetase GlnA, a key enzyme in the process to assimilate ammonia. When cellular nitrogen levels are high, the C-terminal adenylyl transferase (AT) inactivates GlnA by covalent transfer of an adenylyl group from ATP to specific tyrosine residue of GlnA, thus reducing its activity. Conversely, when nitrogen levels are low, the N-terminal adenylyl removase (AR) activates GlnA by removing the adenylyl group by phosphorolysis, increasing its activity. The regulatory region of GlnE binds the signal transduction protein PII (GlnB) which indicates the nitrogen status of the cell. In Alteromonas mediterranea (strain DSM 17117 / CIP 110805 / LMG 28347 / Deep ecotype), this protein is Bifunctional glutamine synthetase adenylyltransferase/adenylyl-removing enzyme.